Here is a 118-residue protein sequence, read N- to C-terminus: Large ribosomal subunit protein bL20 (118 aa).

This sequence belongs to the bacterial ribosomal protein bL20 family.

Binds directly to 23S ribosomal RNA and is necessary for the in vitro assembly process of the 50S ribosomal subunit. It is not involved in the protein synthesizing functions of that subunit. This is Large ribosomal subunit protein bL20 from Shigella dysenteriae serotype 1 (strain Sd197).